The following is a 171-amino-acid chain: Endoribonuclease YbeY (171 aa).

Zn(2+)-binding residues include H130, H134, and H140.

The protein belongs to the endoribonuclease YbeY family. Zn(2+) serves as cofactor.

Its subcellular location is the cytoplasm. In terms of biological role, single strand-specific metallo-endoribonuclease involved in late-stage 70S ribosome quality control and in maturation of the 3' terminus of the 16S rRNA. The sequence is that of Endoribonuclease YbeY from Neisseria meningitidis serogroup C / serotype 2a (strain ATCC 700532 / DSM 15464 / FAM18).